A 468-amino-acid chain; its full sequence is Factor XIIa inhibitor (468 aa).

The N-terminal stretch at 1–23 (MASRLTPLTLLLLLLLAGDRVTS) is a signal peptide. The disordered stretch occupies residues 27 to 60 (VGPGNLQEGESEGDSQKGGILDGESIQGNEDSPT). Residues N65, N176, N227, and N326 are each glycosylated (N-linked (GlcNAc...) asparagine). Disulfide bonds link C97/C396 and C104/C179.

This sequence belongs to the serpin family. Post-translationally, N- and O-glycosylated.

The protein localises to the secreted. In terms of biological role, may play a potentially crucial role in regulating important physiological pathways including complement activation, blood coagulation, fibrinolysis and the generation of kinins. The polypeptide is Factor XIIa inhibitor (Bos taurus (Bovine)).